Consider the following 60-residue polypeptide: Ribosome biogenesis protein Nop10 (60 aa).

Residues 29-60 (CDGPTENSAPAPFSPEDPYGEYRRRVRRRASE) are disordered.

This sequence belongs to the NOP10 family.

Functionally, involved in ribosome biogenesis; more specifically in 18S rRNA pseudouridylation and in cleavage of pre-rRNA. This Halorubrum lacusprofundi (strain ATCC 49239 / DSM 5036 / JCM 8891 / ACAM 34) protein is Ribosome biogenesis protein Nop10.